We begin with the raw amino-acid sequence, 110 residues long: Flagellar hook-basal body complex protein FliE (110 aa).

This sequence belongs to the FliE family.

Its subcellular location is the bacterial flagellum basal body. This is Flagellar hook-basal body complex protein FliE from Pseudomonas entomophila (strain L48).